The chain runs to 620 residues: 1-deoxy-D-xylulose-5-phosphate synthase (620 aa).

Thiamine diphosphate contacts are provided by residues His-80 and 121–123 (GHS). Mg(2+) is bound at residue Asp-152. Residues 153 to 154 (GA), Asn-181, Tyr-288, and Glu-370 each bind thiamine diphosphate. Asn-181 contacts Mg(2+).

This sequence belongs to the transketolase family. DXPS subfamily. In terms of assembly, homodimer. Mg(2+) is required as a cofactor. Thiamine diphosphate serves as cofactor.

The enzyme catalyses D-glyceraldehyde 3-phosphate + pyruvate + H(+) = 1-deoxy-D-xylulose 5-phosphate + CO2. It functions in the pathway metabolic intermediate biosynthesis; 1-deoxy-D-xylulose 5-phosphate biosynthesis; 1-deoxy-D-xylulose 5-phosphate from D-glyceraldehyde 3-phosphate and pyruvate: step 1/1. Catalyzes the acyloin condensation reaction between C atoms 2 and 3 of pyruvate and glyceraldehyde 3-phosphate to yield 1-deoxy-D-xylulose-5-phosphate (DXP). The chain is 1-deoxy-D-xylulose-5-phosphate synthase from Cronobacter sakazakii (strain ATCC BAA-894) (Enterobacter sakazakii).